The sequence spans 265 residues: Undecaprenyl-diphosphatase (265 aa).

Transmembrane regions (helical) follow at residues 7-27 (VIVSIIIGVIEGITEFLPISS), 45-65 (TKILEIFIEFGSALSILYFFH), 86-106 (LHILLAILPTIFFGLLFYKKI), 108-128 (LLFNTYNVMYALILGGIFLLI), 145-165 (ISLLQSAIIGFFQIFCLYPGF), 186-206 (IEFSFIISIPLIMGASFYDFI), 214-234 (ILDLPIFFIGFMISFIVSILC), and 245-265 (TSLIFFGIYRFIISGLIYFIN).

It belongs to the UppP family.

The protein localises to the cell membrane. The catalysed reaction is di-trans,octa-cis-undecaprenyl diphosphate + H2O = di-trans,octa-cis-undecaprenyl phosphate + phosphate + H(+). Functionally, catalyzes the dephosphorylation of undecaprenyl diphosphate (UPP). Confers resistance to bacitracin. This Buchnera aphidicola subsp. Acyrthosiphon pisum (strain 5A) protein is Undecaprenyl-diphosphatase.